We begin with the raw amino-acid sequence, 173 residues long: Lipoprotein signal peptidase (173 aa).

3 helical membrane passes run 12–32, 67–87, and 102–122; these read WLWL…WTIQ, WQRY…VYLL, and ALIL…GYVI. Catalysis depends on residues Asp-123 and Asp-141. Residues 137-157 form a helical membrane-spanning segment; the sequence is FNIADSAIFTGAVIMIFESFF.

Belongs to the peptidase A8 family.

The protein resides in the cell inner membrane. The catalysed reaction is Release of signal peptides from bacterial membrane prolipoproteins. Hydrolyzes -Xaa-Yaa-Zaa-|-(S,diacylglyceryl)Cys-, in which Xaa is hydrophobic (preferably Leu), and Yaa (Ala or Ser) and Zaa (Gly or Ala) have small, neutral side chains.. The protein operates within protein modification; lipoprotein biosynthesis (signal peptide cleavage). In terms of biological role, this protein specifically catalyzes the removal of signal peptides from prolipoproteins. The chain is Lipoprotein signal peptidase from Psychromonas ingrahamii (strain DSM 17664 / CCUG 51855 / 37).